A 345-amino-acid chain; its full sequence is MTTQDKDLTAQTASRVLSGIQPTADSYHLGNYLGAVKQWIDLQDSYDAFYFIPDLHAITVDQEPEELRNRTISGAAQLLALGIDPERSTLFVQSHVPAHAELSWVLTCLTGFGEASRMTQFKDKSSKRGADRTSAGLFTYPMLMAADILLYRPHLVPVGEDQRQHLELTRTLAERFNNRFGKAFEVPEGFIPQGASKIYDLQNPTAKMSKSGDNPKGIINLLDDPKVSTKRIKSAVTDNDGVIAYDPENKPGVSNLLVIQSALTGTSIDSLVDGYQGAGYGALKGDTADALEAFTTPLKAKYDEYMNDRGELERVLAIGAERATEVANETLADVYDKIGFLASRR.

ATP is bound by residues 21–23 (QPT) and 30–31 (GN). The 'HIGH' region signature appears at 22-31 (PTADSYHLGN). D147 serves as a coordination point for L-tryptophan. ATP contacts are provided by residues 159-161 (GED), I198, and 207-211 (KMSKS). The 'KMSKS' region signature appears at 207-211 (KMSKS).

The protein belongs to the class-I aminoacyl-tRNA synthetase family. In terms of assembly, homodimer.

The protein localises to the cytoplasm. It catalyses the reaction tRNA(Trp) + L-tryptophan + ATP = L-tryptophyl-tRNA(Trp) + AMP + diphosphate + H(+). Its function is as follows. Catalyzes the attachment of tryptophan to tRNA(Trp). The polypeptide is Tryptophan--tRNA ligase (Corynebacterium glutamicum (strain ATCC 13032 / DSM 20300 / JCM 1318 / BCRC 11384 / CCUG 27702 / LMG 3730 / NBRC 12168 / NCIMB 10025 / NRRL B-2784 / 534)).